Here is a 328-residue protein sequence, read N- to C-terminus: Malate dehydrogenase (328 aa).

13 to 19 provides a ligand contact to NAD(+); it reads GGKGQIA. Substrate is bound by residues Arg-94 and Arg-100. NAD(+) contacts are provided by residues Asn-107, Gln-114, and 131-133; that span reads VGN. The substrate site is built by Asn-133 and Arg-164. His-189 functions as the Proton acceptor in the catalytic mechanism.

Belongs to the LDH/MDH superfamily. MDH type 2 family.

The catalysed reaction is (S)-malate + NAD(+) = oxaloacetate + NADH + H(+). Catalyzes the reversible oxidation of malate to oxaloacetate. The protein is Malate dehydrogenase of Chlamydia pneumoniae (Chlamydophila pneumoniae).